The chain runs to 395 residues: Putative 8-amino-7-oxononanoate synthase (395 aa).

A substrate-binding site is contributed by R23. Residue 110-111 (GY) participates in pyridoxal 5'-phosphate binding. H135 contacts substrate. Pyridoxal 5'-phosphate contacts are provided by residues S181, 206 to 209 (DEAH), and 237 to 240 (TFSK). Residue K240 is modified to N6-(pyridoxal phosphate)lysine. T354 provides a ligand contact to substrate.

It belongs to the class-II pyridoxal-phosphate-dependent aminotransferase family. BioF subfamily. Homodimer. Pyridoxal 5'-phosphate is required as a cofactor.

The enzyme catalyses 6-carboxyhexanoyl-[ACP] + L-alanine + H(+) = (8S)-8-amino-7-oxononanoate + holo-[ACP] + CO2. Its pathway is cofactor biosynthesis; biotin biosynthesis. In terms of biological role, catalyzes the decarboxylative condensation of pimeloyl-[acyl-carrier protein] and L-alanine to produce 8-amino-7-oxononanoate (AON), [acyl-carrier protein], and carbon dioxide. The sequence is that of Putative 8-amino-7-oxononanoate synthase (bioF) from Halalkalibacterium halodurans (strain ATCC BAA-125 / DSM 18197 / FERM 7344 / JCM 9153 / C-125) (Bacillus halodurans).